Here is an 85-residue protein sequence, read N- to C-terminus: Conotoxin Lt28.7 (85 aa).

The signal sequence occupies residues 1–21; the sequence is MPKLEMMLLVLLILPLCYIDA. A propeptide spanning residues 22 to 40 is cleaved from the precursor; that stretch reads VGPPPPWNMEDEIIEHWQE.

Belongs to the conotoxin D superfamily. Post-translationally, contains 5 disulfide bonds. As to expression, expressed by the venom duct.

Its subcellular location is the secreted. Probable neurotoxin. In Conus litteratus (Lettered cone), this protein is Conotoxin Lt28.7.